We begin with the raw amino-acid sequence, 106 residues long: Insulin-2 (106 aa).

The first 23 residues, 1 to 23 (MALWMQCLPLVLVLLFSTPNTEA), serve as a signal peptide directing secretion. Cystine bridges form between C30-C92, C42-C105, and C91-C96. Residues 56 to 83 (DIEQAQVNGPQDNELDGMQFQPQEYQKM) constitute a propeptide, c peptide.

It belongs to the insulin family. In terms of assembly, heterodimer of a B chain and an A chain linked by two disulfide bonds.

Its subcellular location is the secreted. Functionally, insulin decreases blood glucose concentration. It increases cell permeability to monosaccharides, amino acids and fatty acids. It accelerates glycolysis, the pentose phosphate cycle, and glycogen synthesis in liver. The protein is Insulin-2 (ins-b) of Xenopus laevis (African clawed frog).